The sequence spans 1489 residues: Ras GTPase-activating-like protein rng2 (1489 aa).

Residues 41–147 form the Calponin-homology (CH) domain; that stretch reads LCRVDEAKKW…YCIHALSYFL (107 aa). IQ domains lie at 359 to 388, 389 to 418, 418 to 449, 535 to 564, 565 to 594, and 655 to 684; these read QSSSVVLLQAVIRGYISRNTYRIRKKAYDE, LVNWVTSIQSISRAYLIRAQYRKVVLQEEA, ATKSIQTLQSIIRGGFYRRKYHSLIERLDLFT, ELDNFIKLQNLSRGFMIRRAFKEKLEKLKA, STSSFIALQAIVRAFLLRKNLESIYDSFQK, and FIPEIVLLQSLIRGYLSRNKFSRKLQNFHK. A coiled-coil region spans residues 734-770; sequence EEEVLLEKMRKEIVQQVRDNEEIEVHINELDVKIALL. The Ras-GAP domain maps to 870–1110; the sequence is VLLLRFISQV…QDTMLMLERL (241 aa). The stretch at 1330–1364 forms a coiled coil; that stretch reads QSLLNLREKRAFLDSQLKSYNEYIEQAMETLQSKK.

Interacts with calmodulin cam1.

It is found in the cytoplasm. The protein resides in the cytoskeleton. Its subcellular location is the nucleus envelope. It localises to the microtubule organizing center. The protein localises to the spindle pole body. Functionally, component of the contractile F-actin ring; required for its construction following assembly of F-actin at the division site. This is Ras GTPase-activating-like protein rng2 from Schizosaccharomyces pombe (strain 972 / ATCC 24843) (Fission yeast).